A 471-amino-acid chain; its full sequence is Phosphatidylserine synthase 1 (471 aa).

Ala-2 bears the N-acetylalanine mark. At 2 to 35 the chain is on the cytoplasmic side; the sequence is ASCVGSRTLSKDDVNYRMHFRMINEQQVEDITID. Residues 36-56 form a helical membrane-spanning segment; that stretch reads FFYRPHTITLLSFTIVSLMYF. The Lumenal portion of the chain corresponds to 57–72; it reads AFTRDDSVPEDNIWRG. The chain crosses the membrane as a helical span at residues 73–93; that stretch reads ILSVIFFFLIISVLAFPNGPF. The Cytoplasmic segment spans residues 94–102; it reads TRPHPALWR. A helical membrane pass occupies residues 103–123; sequence MVFGLSVLYFLFLVFLLFLNF. Over 124–160 the chain is Lumenal; the sequence is EQVKSLMYWLDPNLRYATREADIMEYAVNCHVITWER. Residues 161–181 traverse the membrane as a helical segment; the sequence is IVSHFDIFAFGHFWGWAMKAL. The Cytoplasmic portion of the chain corresponds to 182–186; it reads LIRSY. Residues 187-207 form a helical membrane-spanning segment; that stretch reads GLCWTISITWELTELFFMHLL. Residues 208–216 are Lumenal-facing; sequence PNFAECWWD. A helical transmembrane segment spans residues 217-237; the sequence is QVILDILLCNGGGIWLGMVVC. The Cytoplasmic portion of the chain corresponds to 238–286; sequence RFLEMRTYHWASFKDIHTTTGKIKRAVLQFTPASWTYVRWFDPKSSFQR. A helical membrane pass occupies residues 287–307; the sequence is VAGVYLFMIIWQLTELNTFFL. Residues 308–309 are Lumenal-facing; it reads KH. A helical transmembrane segment spans residues 310–330; sequence IFVFQASHPLSWCRILFIGCI. Residues 331–355 are Cytoplasmic-facing; it reads TAPTVRQYYAYLTDTQCKRVGTQCW. A helical transmembrane segment spans residues 356–376; that stretch reads VFGVIGFLEAIVCIKFGQDLF. Residues 377–380 lie on the Lumenal side of the membrane; the sequence is SKTQ. A helical membrane pass occupies residues 381–401; it reads ILYVVFWLLCVAFTTFLCLYG. At 402 to 471 the chain is on the cytoplasmic side; it reads MVWYAEHYGH…SKVTNGVGKK (70 aa). Residues Ser-417, Ser-440, and Ser-452 each carry the phosphoserine modification. A disordered region spans residues 426–471; sequence ISWHHGKGSKGSEDSPPKHSSNNESHSSRRRNRHSKSKVTNGVGKK. Over residues 453 to 462 the composition is skewed to basic residues; sequence SRRRNRHSKS.

Belongs to the phosphatidyl serine synthase family.

Its subcellular location is the endoplasmic reticulum membrane. The enzyme catalyses a 1,2-diacyl-sn-glycero-3-phosphoethanolamine + L-serine = a 1,2-diacyl-sn-glycero-3-phospho-L-serine + ethanolamine. It carries out the reaction a 1,2-diacyl-sn-glycero-3-phosphocholine + L-serine = a 1,2-diacyl-sn-glycero-3-phospho-L-serine + choline. It participates in phospholipid metabolism; phosphatidylserine biosynthesis. Its activity is regulated as follows. Inhibited by exogenous phosphatidylserine. Functionally, catalyzes a base-exchange reaction in which the polar head group of phosphatidylethanolamine (PE) or phosphatidylcholine (PC) is replaced by L-serine. Catalyzes mainly the conversion of phosphatidylcholine. Also converts, in vitro and to a lesser extent, phosphatidylethanolamine. This chain is Phosphatidylserine synthase 1 (PTDSS1), found in Cricetulus griseus (Chinese hamster).